The sequence spans 355 residues: Methylthioribose-1-phosphate isomerase (355 aa).

Residues 50-52 (RGA), R93, and Q198 contribute to the substrate site. D239 functions as the Proton donor in the catalytic mechanism. 249-250 (NK) contacts substrate.

It belongs to the eIF-2B alpha/beta/delta subunits family. MtnA subfamily. In terms of assembly, homodimer.

It catalyses the reaction 5-(methylsulfanyl)-alpha-D-ribose 1-phosphate = 5-(methylsulfanyl)-D-ribulose 1-phosphate. The protein operates within amino-acid biosynthesis; L-methionine biosynthesis via salvage pathway; L-methionine from S-methyl-5-thio-alpha-D-ribose 1-phosphate: step 1/6. Catalyzes the interconversion of methylthioribose-1-phosphate (MTR-1-P) into methylthioribulose-1-phosphate (MTRu-1-P). This Geobacillus kaustophilus (strain HTA426) protein is Methylthioribose-1-phosphate isomerase.